We begin with the raw amino-acid sequence, 675 residues long: Protein PALS1 (675 aa).

Disordered regions lie at residues 1–34 (MTTS…KHRE) and 51–78 (RRSA…KKQE). The interval 1–345 (MTTSHMNGHV…QQIKPPPAKE (345 aa)) is required for the correct localization of PALS1 and PATJ at cell-cell contacts and the normal formation of tight junctions and adherens junctions. Composition is skewed to basic and acidic residues over residues 10-34 (VTEE…KHRE) and 54-78 (AQLE…KKQE). 2 positions are modified to phosphoserine: Ser14 and Ser25. The interaction with PARD6B stretch occupies residues 21–140 (VDLASPEEHQ…LKHIQHTLID (120 aa)). A phosphoserine mark is found at Ser83 and Ser84. L27 domains are found at residues 120–177 (KILE…NKAS) and 179–235 (PFPL…MQLE). Positions 181–243 (PLISNAQDLA…LEPITDERVY (63 aa)) are interaction with LIN7C. The PDZ domain occupies 256–336 (IVRIEKARDI…TLTFVLIPSQ (81 aa)). In terms of domain architecture, SH3 spans 345 to 417 (ETVIHVKAHF…PGKSFQQQRE (73 aa)). A Guanylate kinase-like domain is found at 479-660 (KRPIILIGPQ…AYQELLRLIN (182 aa)). 486 to 493 (GPQNCGQN) contributes to the ATP binding site.

Belongs to the MAGUK family. Heterodimer with MPP1. Forms a heterotrimeric complex composed of PALS1, LIN7B and PATJ; the N-terminal L27 domain of PALS1 interacts with the L27 domain of PATJ and the C-terminal L27 domain of PALS1 interacts with the L27 domain of LIN7B. Component of a complex composed of PALS1, CRB1 and MPP4. Component of a complex whose core is composed of ARHGAP17, AMOT, PALS1, PATJ and PARD3/PAR3. Component of a complex composed of PALS1, CRB1 and EPB41L5. Within the complex, interacts (via HOOK domain) with EPB41L5 (via FERM domain), and interacts with CRB1 (via intracellular domain). Component of a complex composed of PALS1, MPP3 and CRB1; PALS1 acts as a bridging protein between MPP3 (via guanylate kinase-like domain) and CRB1. Component of a complex composed of CRB3, PALS1 and PATJ. As part of the Crumbs complex; interacts with WWP1, the interaction is enhanced by AMOTL2 and facilitates WWP1 localization to the plasma membrane. The Crumbs complex promotes monoubiquitination of AMOTL2 by WWP1, which activates the Hippo signaling pathway. Interacts (via PDZ domain) with PATJ (via N-terminus). Interacts with EZR. Interacts (via PDZ domain) with CRB1 (via C-terminal ERLI motif). While the PDZ domain is sufficient for interaction with CRB1, the adjacent SH3 and guanylate kinase-like domains are likely to contribute to a high affinity interaction. Interacts with WWTR1/TAZ (via WW domain). Interacts with MPP7. Interacts (via PDZ domain) with CRB3 (via C-terminus). Interacts with LIN7C. Interacts with MPDZ. Interacts with PARD6B. Interacts with SC6A1. Interacts with CDH5; the interaction promotes PALS1 localization to cell junctions and is required for CDH5-mediated vascular lumen formation and endothelial cell. Interacts with NPHP1 (via coiled coil and SH3 domains). Interacts with NPHP4. Interacts with CRB2.

The protein resides in the golgi apparatus. It is found in the cell membrane. It localises to the endomembrane system. Its subcellular location is the cell junction. The protein localises to the tight junction. The protein resides in the adherens junction. It is found in the cell projection. It localises to the axon. Its subcellular location is the perikaryon. The protein localises to the apical cell membrane. In terms of biological role, plays a role in tight junction biogenesis and in the establishment of cell polarity in epithelial cells. Also involved in adherens junction biogenesis by ensuring correct localization of the exocyst complex protein EXOC4/SEC8 which allows trafficking of adherens junction structural component CDH1 to the cell surface. Plays a role through its interaction with CDH5 in vascular lumen formation and endothelial membrane polarity. Required during embryonic and postnatal retinal development. Required for the maintenance of cerebellar progenitor cells in an undifferentiated proliferative state, preventing premature differentiation, and is required for cerebellar histogenesis, fissure formation, cerebellar layer organization and cortical development. Plays a role in neuronal progenitor cell survival, potentially via promotion of mTOR signaling. Plays a role in the radial and longitudinal extension of the myelin sheath in Schwann cells. May modulate SC6A1/GAT1-mediated GABA uptake by stabilizing the transporter. May play a role in the T-cell receptor-mediated activation of NF-kappa-B. Required for localization of EZR to the apical membrane of parietal cells and may play a role in the dynamic remodeling of the apical cytoskeleton. Required for the normal polarized localization of the vesicular marker STX4. Required for the correct trafficking of the myelin proteins PMP22 and MAG. Involved in promoting phosphorylation and cytoplasmic retention of transcriptional coactivators YAP1 and WWTR1/TAZ which leads to suppression of TGFB1-dependent transcription of target genes such as CCN2/CTGF, SERPINE1/PAI1, SNAI1/SNAIL1 and SMAD7. This is Protein PALS1 from Pongo abelii (Sumatran orangutan).